The sequence spans 341 residues: tRNA N6-adenosine threonylcarbamoyltransferase (341 aa).

2 residues coordinate Fe cation: His114 and His118. Substrate is bound by residues 136–140 (LVSGG), Asp169, Gly182, Asp186, and Asn278. Asp304 contacts Fe cation.

It belongs to the KAE1 / TsaD family. Requires Fe(2+) as cofactor.

It localises to the cytoplasm. It carries out the reaction L-threonylcarbamoyladenylate + adenosine(37) in tRNA = N(6)-L-threonylcarbamoyladenosine(37) in tRNA + AMP + H(+). Its function is as follows. Required for the formation of a threonylcarbamoyl group on adenosine at position 37 (t(6)A37) in tRNAs that read codons beginning with adenine. Is involved in the transfer of the threonylcarbamoyl moiety of threonylcarbamoyl-AMP (TC-AMP) to the N6 group of A37, together with TsaE and TsaB. TsaD likely plays a direct catalytic role in this reaction. In Lactococcus lactis subsp. cremoris (strain MG1363), this protein is tRNA N6-adenosine threonylcarbamoyltransferase.